The sequence spans 324 residues: HTH-type transcriptional regulator GlxA (324 aa).

The 99-residue stretch at 223 to 321 (LAVLEKMETA…SQTPGSLRRR (99 aa)) folds into the HTH araC/xylS-type domain. 2 DNA-binding regions (H-T-H motif) span residues 240–261 (TAMA…REHR) and 288–311 (IPEI…KRLF).

The protein is HTH-type transcriptional regulator GlxA (glxA) of Rhizobium meliloti (strain 1021) (Ensifer meliloti).